We begin with the raw amino-acid sequence, 376 residues long: Queuine tRNA-ribosyltransferase (376 aa).

The active-site Proton acceptor is the Asp-93. Residues 93 to 97, Asp-147, Gln-190, and Gly-217 contribute to the substrate site; that span reads DSGGF. Positions 248-254 are RNA binding; it reads GVGTPDD. Asp-267 (nucleophile) is an active-site residue. The segment at 272 to 276 is RNA binding; important for wobble base 34 recognition; sequence TRAGR.

It belongs to the queuine tRNA-ribosyltransferase family. Homodimer. Within each dimer, one monomer is responsible for RNA recognition and catalysis, while the other monomer binds to the replacement base PreQ1.

It carries out the reaction 7-aminomethyl-7-carbaguanine + guanosine(34) in tRNA = 7-aminomethyl-7-carbaguanosine(34) in tRNA + guanine. The protein operates within tRNA modification; tRNA-queuosine biosynthesis. Functionally, catalyzes the base-exchange of a guanine (G) residue with the queuine precursor 7-aminomethyl-7-deazaguanine (PreQ1) at position 34 (anticodon wobble position) in tRNAs with GU(N) anticodons (tRNA-Asp, -Asn, -His and -Tyr). Catalysis occurs through a double-displacement mechanism. The nucleophile active site attacks the C1' of nucleotide 34 to detach the guanine base from the RNA, forming a covalent enzyme-RNA intermediate. The proton acceptor active site deprotonates the incoming PreQ1, allowing a nucleophilic attack on the C1' of the ribose to form the product. After dissociation, two additional enzymatic reactions on the tRNA convert PreQ1 to queuine (Q), resulting in the hypermodified nucleoside queuosine (7-(((4,5-cis-dihydroxy-2-cyclopenten-1-yl)amino)methyl)-7-deazaguanosine). The protein is Queuine tRNA-ribosyltransferase of Mesorhizobium japonicum (strain LMG 29417 / CECT 9101 / MAFF 303099) (Mesorhizobium loti (strain MAFF 303099)).